The chain runs to 353 residues: Guanine nucleotide-binding protein subunit alpha (353 aa).

Residues 1–25 (MGCGMSTEDKEGKARNEEIENQLKR) are disordered. Gly2 carries the N-myristoyl glycine lipid modification. The S-palmitoyl cysteine moiety is linked to residue Cys3. The span at 7–25 (TEDKEGKARNEEIENQLKR) shows a compositional bias: basic and acidic residues. The G-alpha domain occupies 32-353 (NEIKMLLLGA…QENLRLCGLI (322 aa)). Positions 35–48 (KMLLLGAGESGKST) are G1 motif. Glu43, Ser44, Gly45, Lys46, Ser47, Thr48, Asp150, Leu175, Thr181, Gly203, Asn269, Lys270, Asp272, and Ala325 together coordinate GTP. Residue Ser47 participates in Mg(2+) binding. The tract at residues 173–181 (DVLRSRVKT) is G2 motif. Thr181 serves as a coordination point for Mg(2+). Residues 196–205 (YRMFDVGGQR) are G3 motif. The G4 motif stretch occupies residues 265-272 (ILFLNKID). The segment at 323-328 (TCATDT) is G5 motif.

This sequence belongs to the G-alpha family. G(q) subfamily. As to quaternary structure, g proteins are composed of 3 units; alpha, beta and gamma. The alpha chain contains the guanine nucleotide binding site. The cofactor is Mg(2+).

Functionally, guanine nucleotide-binding proteins (G proteins) are involved as modulators or transducers in various transmembrane signaling systems. In Colletotrichum trifolii, this protein is Guanine nucleotide-binding protein subunit alpha (CTG1).